The following is a 138-amino-acid chain: Small ribosomal subunit protein uS11c (138 aa).

A disordered region spans residues 1–23; the sequence is MAKPILRIGSRKNTRSSSRKNVR. The segment covering 9–23 has biased composition (basic residues); that stretch reads GSRKNTRSSSRKNVR.

The protein belongs to the universal ribosomal protein uS11 family. As to quaternary structure, part of the 30S ribosomal subunit.

It is found in the plastid. Its subcellular location is the chloroplast. This Nasturtium officinale (Watercress) protein is Small ribosomal subunit protein uS11c.